The sequence spans 328 residues: GTP 3',8-cyclase (328 aa).

Positions 1 to 229 (MNQVDYLRIS…DAQVRGSGPA (229 aa)) constitute a Radical SAM core domain. Position 8 (arginine 8) interacts with GTP. [4Fe-4S] cluster contacts are provided by cysteine 15 and cysteine 19. Residue tyrosine 21 participates in S-adenosyl-L-methionine binding. Residue cysteine 22 participates in [4Fe-4S] cluster binding. GTP is bound at residue arginine 60. Glycine 64 is an S-adenosyl-L-methionine binding site. A GTP-binding site is contributed by threonine 91. Serine 115 contributes to the S-adenosyl-L-methionine binding site. Lysine 155 is a binding site for GTP. Position 189 (methionine 189) interacts with S-adenosyl-L-methionine. [4Fe-4S] cluster-binding residues include cysteine 252 and cysteine 255. Position 257 to 259 (257 to 259 (RMR)) interacts with GTP. Cysteine 269 lines the [4Fe-4S] cluster pocket.

It belongs to the radical SAM superfamily. MoaA family. Monomer and homodimer. The cofactor is [4Fe-4S] cluster.

It carries out the reaction GTP + AH2 + S-adenosyl-L-methionine = (8S)-3',8-cyclo-7,8-dihydroguanosine 5'-triphosphate + 5'-deoxyadenosine + L-methionine + A + H(+). It functions in the pathway cofactor biosynthesis; molybdopterin biosynthesis. Catalyzes the cyclization of GTP to (8S)-3',8-cyclo-7,8-dihydroguanosine 5'-triphosphate. The polypeptide is GTP 3',8-cyclase (Trichormus variabilis (strain ATCC 29413 / PCC 7937) (Anabaena variabilis)).